Reading from the N-terminus, the 403-residue chain is Tyrosine--tRNA ligase (403 aa).

The 'HIGH' region motif lies at 42 to 51; that stretch reads PTAPDLHLGH. The 'KMSKS' region motif lies at 226–230; sequence KMSKS. An ATP-binding site is contributed by Lys229. The region spanning 336-396 is the S4 RNA-binding domain; it reads MPISAVLNKA…GKKAFGRVTL (61 aa).

This sequence belongs to the class-I aminoacyl-tRNA synthetase family. TyrS type 2 subfamily. Homodimer.

It localises to the cytoplasm. The catalysed reaction is tRNA(Tyr) + L-tyrosine + ATP = L-tyrosyl-tRNA(Tyr) + AMP + diphosphate + H(+). Its function is as follows. Catalyzes the attachment of tyrosine to tRNA(Tyr) in a two-step reaction: tyrosine is first activated by ATP to form Tyr-AMP and then transferred to the acceptor end of tRNA(Tyr). In Pseudomonas savastanoi pv. phaseolicola (strain 1448A / Race 6) (Pseudomonas syringae pv. phaseolicola (strain 1448A / Race 6)), this protein is Tyrosine--tRNA ligase.